The chain runs to 320 residues: Cytochrome f (320 aa).

The signal sequence occupies residues 1 to 35; it reads MQMRNTFSWIKEEIIRFIAVSLIIYIITRAPISNA. The heme site is built by tyrosine 36, cysteine 56, cysteine 59, and histidine 60. The chain crosses the membrane as a helical span at residues 286 to 306; sequence VQGLLLFLASIILAQIFLVLK.

This sequence belongs to the cytochrome f family. In terms of assembly, the 4 large subunits of the cytochrome b6-f complex are cytochrome b6, subunit IV (17 kDa polypeptide, petD), cytochrome f and the Rieske protein, while the 4 small subunits are PetG, PetL, PetM and PetN. The complex functions as a dimer. Heme serves as cofactor.

It is found in the plastid. The protein localises to the chloroplast thylakoid membrane. Its function is as follows. Component of the cytochrome b6-f complex, which mediates electron transfer between photosystem II (PSII) and photosystem I (PSI), cyclic electron flow around PSI, and state transitions. The protein is Cytochrome f of Morus indica (Mulberry).